The primary structure comprises 216 residues: MTIKKMEAIVKGLINAGYLKNKMVSKALLTVPRHEFIPAELHDYAYVDTPLNIGHGQTISAIHMVAIICDALDLKEGDKVLEIGTGSGYHAAVVAEIVGKNGQVITIERIPELAEKAESTLKKLGYTNVKVICGNGTLGSSEFAPYDKIYLTASGPDIPNSLIEQLKKGGKLVAPVGLYIQDLILLEKKNGNIIKKNLGAVAFVPLIGKNGWHNEY.

Residue serine 60 is part of the active site.

The protein belongs to the methyltransferase superfamily. L-isoaspartyl/D-aspartyl protein methyltransferase family.

The protein resides in the cytoplasm. The enzyme catalyses [protein]-L-isoaspartate + S-adenosyl-L-methionine = [protein]-L-isoaspartate alpha-methyl ester + S-adenosyl-L-homocysteine. Catalyzes the methyl esterification of L-isoaspartyl residues in peptides and proteins that result from spontaneous decomposition of normal L-aspartyl and L-asparaginyl residues. It plays a role in the repair and/or degradation of damaged proteins. In Methanococcus aeolicus (strain ATCC BAA-1280 / DSM 17508 / OCM 812 / Nankai-3), this protein is Protein-L-isoaspartate O-methyltransferase.